The chain runs to 346 residues: E3 ubiquitin-protein ligase RNF146-A (346 aa).

The RING-type zinc-finger motif lies at 37–75 (CAICLQTCVHPVSLPCKHVFCYLCVKGASWLGKRCALCR). Residues 91–167 (PELKAASRGN…EHGRRRKIKR (77 aa)) enclose the WWE domain. Disordered regions lie at residues 195 to 240 (SSAD…GTSL) and 256 to 301 (ERSH…ALVA). A compositionally biased stretch (low complexity) spans 202–216 (SVPAQSGASVQSSSV). The segment covering 281-295 (SIEETESDASSDSED) has biased composition (acidic residues).

In terms of assembly, interacts with poly-ADP-ribosylated AXIN1, AXIN2, BLZF1 and CASC3. Post-translationally, ubiquitinated; autoubiquitinated. Autoubiquitination is enhanced upon poly(ADP-ribose)-binding.

Its subcellular location is the cytoplasm. It is found in the cytosol. The catalysed reaction is S-ubiquitinyl-[E2 ubiquitin-conjugating enzyme]-L-cysteine + [acceptor protein]-L-lysine = [E2 ubiquitin-conjugating enzyme]-L-cysteine + N(6)-ubiquitinyl-[acceptor protein]-L-lysine.. It functions in the pathway protein modification; protein ubiquitination. In terms of biological role, E3 ubiquitin-protein ligase that specifically binds poly-ADP-ribosylated proteins and mediates their ubiquitination and subsequent degradation. Acts as an activator of the Wnt signaling pathway by mediating the ubiquitination of poly-ADP-ribosylated AXIN1 and AXIN2, 2 key components of the beta-catenin destruction complex. Acts in cooperation with tankyrase proteins (TNKS and TNKS2), which mediate poly-ADP-ribosylation of target proteins AXIN1, AXIN2, BLZF1, CASC3, TNKS and TNKS2. Recognizes and binds tankyrase-dependent poly-ADP-ribosylated proteins via its WWE domain and mediates their ubiquitination. The polypeptide is E3 ubiquitin-protein ligase RNF146-A (RNF146A) (Bos taurus (Bovine)).